The following is a 601-amino-acid chain: Aspartate--tRNA ligase (601 aa).

Glu183 contacts L-aspartate. Residues Gln207–Lys210 are aspartate. Residue Arg229 participates in L-aspartate binding. Residues Arg229 to Glu231 and Gln238 each bind ATP. Position 457 (His457) interacts with L-aspartate. Glu497 contributes to the ATP binding site. Arg504 contributes to the L-aspartate binding site. ATP is bound at residue Gly549–Arg552.

The protein belongs to the class-II aminoacyl-tRNA synthetase family. Type 1 subfamily. In terms of assembly, homodimer.

It is found in the cytoplasm. The enzyme catalyses tRNA(Asp) + L-aspartate + ATP = L-aspartyl-tRNA(Asp) + AMP + diphosphate. In terms of biological role, catalyzes the attachment of L-aspartate to tRNA(Asp) in a two-step reaction: L-aspartate is first activated by ATP to form Asp-AMP and then transferred to the acceptor end of tRNA(Asp). This is Aspartate--tRNA ligase from Leptospira interrogans serogroup Icterohaemorrhagiae serovar copenhageni (strain Fiocruz L1-130).